The sequence spans 373 residues: Ribosomal protein uL16 3-hydroxylase (373 aa).

Residues 92–219 (PTAALMRPFR…LISGFADYVL (128 aa)) form the JmjC domain. Substrate-binding positions include Ser-114, 125 to 127 (HLD), Arg-140, and His-187. His-125 and Asp-127 together coordinate Fe cation. His-187 is a Fe cation binding site.

Belongs to the ROX family. RoxA/YcfD subfamily. As to quaternary structure, homodimer. The cofactor is Fe(2+).

The enzyme catalyses L-arginyl-[ribosomal protein uL16] + 2-oxoglutarate + O2 = (3R)-3-hydroxy-L-arginyl-[ribosomal protein uL16] + succinate + CO2. Growth-regulating oxygenase that catalyzes the hydroxylation of ribosomal protein uL16 on 'Arg-81'. The chain is Ribosomal protein uL16 3-hydroxylase (roxA) from Escherichia coli (strain K12).